The following is a 1404-amino-acid chain: DNA (cytosine-5)-methyltransferase 3 (1404 aa).

Over residues 1–10 (MKTKAGKQKK) the composition is skewed to basic residues. The disordered stretch occupies residues 1-35 (MKTKAGKQKKRSVDSDDDVSRERRPKRATSGTNFK). A compositionally biased stretch (basic and acidic residues) spans 11-22 (RSVDSDDDVSRE). Lys486 participates in a covalent cross-link: Glycyl lysine isopeptide (Lys-Gly) (interchain with G-Cter in ubiquitin). BAH domains are found at residues 614–748 (RKMD…FSLP) and 788–929 (IKYS…KKLP). Residues 969–1402 (LATLDIFAGC…RKLKEALHLR (434 aa)) form the SAM-dependent MTase C5-type domain. The active site involves Cys1085.

The protein belongs to the class I-like SAM-binding methyltransferase superfamily. C5-methyltransferase family.

The protein resides in the nucleus. The catalysed reaction is a 2'-deoxycytidine in DNA + S-adenosyl-L-methionine = a 5-methyl-2'-deoxycytidine in DNA + S-adenosyl-L-homocysteine + H(+). In terms of biological role, maintains chromatin CpG methylation that plays a role in genomic imprinting, regulation of embryogenesis and seed viability. Required for proper patterns of CG DNA methylation in dividing cells. Required during the endosperm development in seeds. The polypeptide is DNA (cytosine-5)-methyltransferase 3 (MET3) (Arabidopsis thaliana (Mouse-ear cress)).